A 972-amino-acid chain; its full sequence is MNTLSQAIKAYNSNDYQLALKLFEKSAEIYGRKIVEFQITKCKEKLSAHPSVNSAHLSVNKEEKVNVCDSPLDIATQLLLSNVKKLVLSDSEKNTLKNKWKLLTEKKSENAEVRAVALVPKDFPKDLVLAPLPDHVNDFTWYKKRKKRLGIKPEHQHVGLSIIVTTFNRPAILSITLACLVNQKTHYPFEVIVTDDGSQEDLSPIIRQYENKLDIRYVRQKDNGFQASAARNMGLRLAKYDFIGLLDCDMAPNPLWVHSYVAELLEDDDLTIIGPRKYIDTQHIDPKDFLNNASLLESLPEVKTNNSVAAKGEGTVSLDWRLEQFEKTENLRLSDSPFRFFAAGNVAFAKKWLNKSGFFDEEFNHWGGEDVEFGYRLFRYGSFFKTIDGIMAYHQEPPGKENETDREAGKNITLDIMREKVPYIYRKLLPIEDSHINRVPLVSIYIPAYNCANYIQRCVDSALNQTVVDLEVCICNDGSTDNTLEVINKLYGNNPRVRIMSKPNGGIASASNAAVSFAKGYYIGQLDSDDYLEPDAVELCLKEFLKDKTLACVYTTNRNVNPDGSLIANGYNWPEFSREKLTTAMIAHHFRMFTIRAWHLTDGFNEKIENAVDYDMFLKLSEVGKFKHLNKICYNRVLHGDNTSIKKLGIQKKNHFVVVNQSLNRQGITYYNYDEFDDLDESRKYIFNKTAEYQEEIDILKDIKIIQNKDAKIAVSIFYPNTLNGLVKKLNNIIEYNKNIFVIVLHVDKNHLTPDIKKEILAFYHKHQVNILLNNDISYYTSNRLIKTEAHLSNINKLSQLNLNCEYIIFDNHDSLFVKNDSYAYMKKYDVGMNFSALTHDWIEKINAHPPFKKLIKTYFNDNDLKSMNVKGASQGMFMTYALAHELLTIIKEVITSCQSIDSVPEYNTEDIWFQFALLILEKKTGHVFNKTSTLTYMPWERKLQWTNEQIESAKRGENIPVNKFIINSITL.

The tract at residues 152 to 325 (KPEHQHVGLS…VSLDWRLEQF (174 aa)) is A1. The A2 stretch occupies residues 432-604 (EDSHINRVPL…IRAWHLTDGF (173 aa)).

This sequence belongs to the glycosyltransferase 2 family. CS/HAS subfamily. Mg(2+) is required as a cofactor. Requires Co(2+) as cofactor.

It is found in the cell membrane. The enzyme catalyses [hyaluronan](n) + UDP-N-acetyl-alpha-D-glucosamine = N-acetyl-beta-D-glucosaminyl-(1-&gt;4)-[hyaluronan](n) + UDP + H(+). The catalysed reaction is N-acetyl-beta-D-glucosaminyl-(1-&gt;4)-[hyaluronan](n) + UDP-alpha-D-glucuronate = [hyaluronan](n+1) + UDP + H(+). It catalyses the reaction 3-O-(beta-D-GalNAc-(1-&gt;4)-beta-D-GlcA-(1-&gt;3)-beta-D-Gal-(1-&gt;3)-beta-D-Gal-(1-&gt;4)-beta-D-Xyl)-L-seryl-[protein] + UDP-alpha-D-glucuronate = 3-O-(beta-D-GlcA-(1-&gt;3)-beta-D-GalNAc-(1-&gt;4)-beta-D-GlcA-(1-&gt;3)-beta-D-Gal-(1-&gt;3)-beta-D-Gal-(1-&gt;4)-beta-D-Xyl)-L-seryl-[protein] + UDP + H(+). It carries out the reaction 3-O-{[beta-D-GalNAc-(1-&gt;4)-beta-D-GlcA-(1-&gt;3)](n)-beta-D-GalNAc-(1-&gt;4)-beta-D-GlcA-(1-&gt;3)-beta-D-Gal-(1-&gt;3)-beta-D-Gal-(1-&gt;4)-beta-D-Xyl}-L-seryl-[protein] + UDP-alpha-D-glucuronate = 3-O-{beta-D-GlcA-(1-&gt;3)-[beta-D-GalNAc-(1-&gt;4)-beta-D-GlcA-(1-&gt;3)](n)-beta-D-GalNAc-(1-&gt;4)-beta-D-GlcA-(1-&gt;3)-beta-D-Gal-(1-&gt;3)-beta-D-Gal-(1-&gt;4)-beta-D-Xyl}-L-seryl-[protein] + UDP + H(+). Functionally, catalyzes the polymerization of hyaluronan, a polysaccharide composed of a repeating disaccharide of N-acetylglucosamine (GlcNAc) and glucuronic acid (GlcUA) units. Each unit has the composition in beta-(1-&gt;4)-GlcUA-beta-(1-&gt;3)-GlcNAc. This Pasteurella multocida protein is Hyaluronan synthase (hyaD).